Consider the following 147-residue polypeptide: 3-dehydroquinate dehydratase (147 aa).

Y23 serves as the catalytic Proton acceptor. Positions 75, 81, and 88 each coordinate substrate. The active-site Proton donor is the H101. Substrate-binding positions include 102–103 (LS) and R112.

The protein belongs to the type-II 3-dehydroquinase family. In terms of assembly, homododecamer.

It carries out the reaction 3-dehydroquinate = 3-dehydroshikimate + H2O. It participates in metabolic intermediate biosynthesis; chorismate biosynthesis; chorismate from D-erythrose 4-phosphate and phosphoenolpyruvate: step 3/7. In terms of biological role, catalyzes a trans-dehydration via an enolate intermediate. This Thioalkalivibrio sulfidiphilus (strain HL-EbGR7) protein is 3-dehydroquinate dehydratase.